The following is a 175-amino-acid chain: Ribosome-binding factor A (175 aa).

A disordered region spans residues 129-175 (GAKPAGEADPYRDRGSADEPSDAGGLVIRTSDGLEAENTGDDYQAED). Acidic residues predominate over residues 162-175 (LEAENTGDDYQAED).

This sequence belongs to the RbfA family. In terms of assembly, monomer. Binds 30S ribosomal subunits, but not 50S ribosomal subunits or 70S ribosomes.

It is found in the cytoplasm. Functionally, one of several proteins that assist in the late maturation steps of the functional core of the 30S ribosomal subunit. Associates with free 30S ribosomal subunits (but not with 30S subunits that are part of 70S ribosomes or polysomes). Required for efficient processing of 16S rRNA. May interact with the 5'-terminal helix region of 16S rRNA. The sequence is that of Ribosome-binding factor A from Mycobacterium marinum (strain ATCC BAA-535 / M).